The following is a 204-amino-acid chain: Pyrrolidone-carboxylate peptidase (204 aa).

Catalysis depends on residues E80, C142, and H165.

It belongs to the peptidase C15 family. In terms of assembly, homotetramer.

It is found in the cytoplasm. It carries out the reaction Release of an N-terminal pyroglutamyl group from a polypeptide, the second amino acid generally not being Pro.. In terms of biological role, removes 5-oxoproline from various penultimate amino acid residues except L-proline. This Lysinibacillus sphaericus (strain C3-41) protein is Pyrrolidone-carboxylate peptidase.